The sequence spans 65 residues: Large ribosomal subunit protein bL33m (65 aa).

The protein belongs to the bacterial ribosomal protein bL33 family. As to quaternary structure, component of the mitochondrial ribosome large subunit (39S) which comprises a 16S rRNA and about 50 distinct proteins.

Its subcellular location is the mitochondrion. The polypeptide is Large ribosomal subunit protein bL33m (mRpL33) (Anopheles gambiae (African malaria mosquito)).